Reading from the N-terminus, the 124-residue chain is Small ribosomal subunit protein bS6 (124 aa).

The interval 97 to 124 (EQGPSAMMRRGDRDRSNRSDRRRDRDAA) is disordered. Residues 105-124 (RRGDRDRSNRSDRRRDRDAA) are compositionally biased toward basic and acidic residues.

Belongs to the bacterial ribosomal protein bS6 family.

Its function is as follows. Binds together with bS18 to 16S ribosomal RNA. In Zymomonas mobilis subsp. mobilis (strain ATCC 31821 / ZM4 / CP4), this protein is Small ribosomal subunit protein bS6.